We begin with the raw amino-acid sequence, 543 residues long: Cobyric acid synthase (543 aa).

The 224-residue stretch at 260–483 folds into the GATase cobBQ-type domain; it reads MLDIVLVDLP…LHGVFDADGF (224 aa). Catalysis depends on cysteine 346, which acts as the Nucleophile. Residue histidine 475 is part of the active site.

Belongs to the CobB/CobQ family. CobQ subfamily.

It participates in cofactor biosynthesis; adenosylcobalamin biosynthesis. Functionally, catalyzes amidations at positions B, D, E, and G on adenosylcobyrinic A,C-diamide. NH(2) groups are provided by glutamine, and one molecule of ATP is hydrogenolyzed for each amidation. In Nitratidesulfovibrio vulgaris (strain ATCC 29579 / DSM 644 / CCUG 34227 / NCIMB 8303 / VKM B-1760 / Hildenborough) (Desulfovibrio vulgaris), this protein is Cobyric acid synthase.